A 200-amino-acid chain; its full sequence is ATP synthase subunit s, mitochondrial (200 aa).

The transit peptide at 1–25 (MMMFGKISRQLCSLKKIPWSCDSRY) directs the protein to the mitochondrion. The tract at residues 1-61 (MMMFGKISRQ…SEWLLRCGAK (61 aa)) is N-terminal domain. Gly59 lines the Mg(2+) pocket. 4 LRR repeats span residues 62–87 (VRYC…RYKI), 88–116 (QAID…KITL), 117–141 (CKCH…KSLL), and 142–173 (ELEI…LSDL). Thr93 provides a ligand contact to Mg(2+).

It belongs to the ATP synthase subunit s family. As to quaternary structure, homotetramer. Associates with ATP synthase.

Its subcellular location is the mitochondrion. It is found in the mitochondrion inner membrane. In terms of biological role, involved in regulation of mitochondrial membrane ATP synthase. Necessary for H(+) conduction of ATP synthase. Facilitates energy-driven catalysis of ATP synthesis by blocking a proton leak through an alternative proton exit pathway. This is ATP synthase subunit s, mitochondrial (Dmac2l) from Mus musculus (Mouse).